The following is a 250-amino-acid chain: Urease accessory protein UreF (250 aa).

Positions 1–21 (MDEADPGEAEAAQAEAAQDGA) are disordered. Residues 9 to 21 (AEAAQAEAAQDGA) show a composition bias toward low complexity.

This sequence belongs to the UreF family. UreD, UreF and UreG form a complex that acts as a GTP-hydrolysis-dependent molecular chaperone, activating the urease apoprotein by helping to assemble the nickel containing metallocenter of UreC. The UreE protein probably delivers the nickel.

It is found in the cytoplasm. In terms of biological role, required for maturation of urease via the functional incorporation of the urease nickel metallocenter. In Methylobacterium sp. (strain 4-46), this protein is Urease accessory protein UreF.